The sequence spans 335 residues: Putative zinc metalloprotease CPE1693 (335 aa).

H17 serves as a coordination point for Zn(2+). Residue E18 is part of the active site. Residue H21 participates in Zn(2+) binding. 3 helical membrane passes run 88-110 (ILVM…IGLA), 262-284 (LLWF…FPAL), and 312-334 (TVGF…IFPI). In terms of domain architecture, PDZ spans 96-174 (FMNYVLALII…PVELEIKRGN (79 aa)).

This sequence belongs to the peptidase M50B family. Zn(2+) is required as a cofactor.

It localises to the cell membrane. The sequence is that of Putative zinc metalloprotease CPE1693 from Clostridium perfringens (strain 13 / Type A).